A 367-amino-acid chain; its full sequence is Glutamate 5-kinase (367 aa).

Lys10 contributes to the ATP binding site. Ser50, Asp137, and Asn149 together coordinate substrate. Residues 169 to 170 (TD) and 211 to 217 (TGGMGTK) each bind ATP. The 79-residue stretch at 275 to 353 (AGEITVDAGA…QQIDAILGYE (79 aa)) folds into the PUA domain.

The protein belongs to the glutamate 5-kinase family.

It localises to the cytoplasm. The catalysed reaction is L-glutamate + ATP = L-glutamyl 5-phosphate + ADP. It participates in amino-acid biosynthesis; L-proline biosynthesis; L-glutamate 5-semialdehyde from L-glutamate: step 1/2. Functionally, catalyzes the transfer of a phosphate group to glutamate to form L-glutamate 5-phosphate. This Klebsiella pneumoniae subsp. pneumoniae (strain ATCC 700721 / MGH 78578) protein is Glutamate 5-kinase.